The chain runs to 257 residues: Imidazole glycerol phosphate synthase subunit HisF (257 aa).

Catalysis depends on residues Asp12 and Asp131.

It belongs to the HisA/HisF family. As to quaternary structure, heterodimer of HisH and HisF.

The protein resides in the cytoplasm. The catalysed reaction is 5-[(5-phospho-1-deoxy-D-ribulos-1-ylimino)methylamino]-1-(5-phospho-beta-D-ribosyl)imidazole-4-carboxamide + L-glutamine = D-erythro-1-(imidazol-4-yl)glycerol 3-phosphate + 5-amino-1-(5-phospho-beta-D-ribosyl)imidazole-4-carboxamide + L-glutamate + H(+). Its pathway is amino-acid biosynthesis; L-histidine biosynthesis; L-histidine from 5-phospho-alpha-D-ribose 1-diphosphate: step 5/9. IGPS catalyzes the conversion of PRFAR and glutamine to IGP, AICAR and glutamate. The HisF subunit catalyzes the cyclization activity that produces IGP and AICAR from PRFAR using the ammonia provided by the HisH subunit. This Marinomonas sp. (strain MWYL1) protein is Imidazole glycerol phosphate synthase subunit HisF.